The following is an 82-amino-acid chain: Phosphoribosylformylglycinamidine synthase subunit PurS (82 aa).

This sequence belongs to the PurS family. As to quaternary structure, homodimer. Part of the FGAM synthase complex composed of 1 PurL, 1 PurQ and 2 PurS subunits.

Its subcellular location is the cytoplasm. The catalysed reaction is N(2)-formyl-N(1)-(5-phospho-beta-D-ribosyl)glycinamide + L-glutamine + ATP + H2O = 2-formamido-N(1)-(5-O-phospho-beta-D-ribosyl)acetamidine + L-glutamate + ADP + phosphate + H(+). It participates in purine metabolism; IMP biosynthesis via de novo pathway; 5-amino-1-(5-phospho-D-ribosyl)imidazole from N(2)-formyl-N(1)-(5-phospho-D-ribosyl)glycinamide: step 1/2. Its function is as follows. Part of the phosphoribosylformylglycinamidine synthase complex involved in the purines biosynthetic pathway. Catalyzes the ATP-dependent conversion of formylglycinamide ribonucleotide (FGAR) and glutamine to yield formylglycinamidine ribonucleotide (FGAM) and glutamate. The FGAM synthase complex is composed of three subunits. PurQ produces an ammonia molecule by converting glutamine to glutamate. PurL transfers the ammonia molecule to FGAR to form FGAM in an ATP-dependent manner. PurS interacts with PurQ and PurL and is thought to assist in the transfer of the ammonia molecule from PurQ to PurL. The chain is Phosphoribosylformylglycinamidine synthase subunit PurS from Thermotoga maritima (strain ATCC 43589 / DSM 3109 / JCM 10099 / NBRC 100826 / MSB8).